We begin with the raw amino-acid sequence, 426 residues long: MKHLTEMVRQHKAGKTNGIYAVCSAHPLVLEAAIRYASANQTPLLIEATSNQVDQFGGYTGMTPADFRGFVCQLADSLNFPQDALILGGDHLGPNRWQNLPAAQAMANADDLIKSYVAAGFKKIHLDCSMSCQDDPVPLTDDIVAERAARLAKVAEETCREHFGEADLVYVIGTEVPVPGGAHETLSELAVTTPDAARATLEAHRHAFEKQGLSAIWPRIIALVVQPGVEFDHTNVIDYQPVKATALSQMVENYETLIFEAHSTDYQTPQSLRQLVIDHFAILKVGPALTFALREALFSLAAIEEELVPAKACSGLRQVLENVMLDRPEYWQSHYHGDGNARRLARGYSYSDRVRYYWPDSQIDDAFAHLVRNLADSPIPLPLISQYLPLQYVKVRSGELQPTPRELIINHIQDILAQYHTACEGQ.

Belongs to the GatZ/KbaZ family. KbaZ subfamily. In terms of assembly, forms a complex with KbaY.

It participates in carbohydrate metabolism; D-tagatose 6-phosphate degradation; D-glyceraldehyde 3-phosphate and glycerone phosphate from D-tagatose 6-phosphate: step 2/2. Its function is as follows. Component of the tagatose-1,6-bisphosphate aldolase KbaYZ that is required for full activity and stability of the Y subunit. Could have a chaperone-like function for the proper and stable folding of KbaY. When expressed alone, KbaZ does not show any aldolase activity. The sequence is that of D-tagatose-1,6-bisphosphate aldolase subunit KbaZ from Escherichia coli O17:K52:H18 (strain UMN026 / ExPEC).